A 788-amino-acid polypeptide reads, in one-letter code: Protein translocase subunit SecA 2 (788 aa).

Residues glutamine 86, 104 to 108, and aspartate 493 contribute to the ATP site; that span reads GEGKT.

Belongs to the SecA family. Monomer and homodimer. Part of the essential Sec protein translocation apparatus which comprises SecA, SecYEG and auxiliary proteins SecDF. Other proteins may also be involved.

It localises to the cell membrane. The protein localises to the cytoplasm. It catalyses the reaction ATP + H2O + cellular proteinSide 1 = ADP + phosphate + cellular proteinSide 2.. In terms of biological role, part of the Sec protein translocase complex. Interacts with the SecYEG preprotein conducting channel. Has a central role in coupling the hydrolysis of ATP to the transfer of proteins into and across the cell membrane, serving as an ATP-driven molecular motor driving the stepwise translocation of polypeptide chains across the membrane. In Bacillus cereus (strain ZK / E33L), this protein is Protein translocase subunit SecA 2.